Reading from the N-terminus, the 433-residue chain is GTPase Obg (433 aa).

The 159-residue stretch at methionine 1 to leucine 159 folds into the Obg domain. The region spanning alanine 160 to glutamine 329 is the OBG-type G domain. GTP-binding positions include glycine 166–serine 173, phenylalanine 191–valine 195, aspartate 212–glycine 215, asparagine 282–aspartate 285, and isoleucine 310–alanine 312. Mg(2+) contacts are provided by serine 173 and threonine 193. The region spanning alanine 355–aspartate 433 is the OCT domain.

It belongs to the TRAFAC class OBG-HflX-like GTPase superfamily. OBG GTPase family. In terms of assembly, monomer. The cofactor is Mg(2+).

Its subcellular location is the cytoplasm. Its function is as follows. An essential GTPase which binds GTP, GDP and possibly (p)ppGpp with moderate affinity, with high nucleotide exchange rates and a fairly low GTP hydrolysis rate. Plays a role in control of the cell cycle, stress response, ribosome biogenesis and in those bacteria that undergo differentiation, in morphogenesis control. This Mycoplasma pneumoniae (strain ATCC 29342 / M129 / Subtype 1) (Mycoplasmoides pneumoniae) protein is GTPase Obg.